The chain runs to 218 residues: ATP-dependent dethiobiotin synthetase BioD (218 aa).

Position 9 to 15 (9 to 15) interacts with ATP; that stretch reads TNAGKTT. Thr14 provides a ligand contact to Mg(2+). Lys35 is an active-site residue. Residue Lys35 participates in phosphate binding. Residue Thr39 participates in substrate binding. ATP is bound by residues Asp50, Glu116, and 116 to 119; that span reads EGAG. 2 residues coordinate Mg(2+): Asp50 and Glu116. 116–119 is a binding site for phosphate; that stretch reads EGAG. 151–154 lines the substrate pocket; sequence GLIN. ATP is bound by residues Asn175 and 175-177; that span reads NLK.

Belongs to the dethiobiotin synthetase family. In terms of assembly, homodimer. It depends on Mg(2+) as a cofactor.

It localises to the cytoplasm. It catalyses the reaction (7R,8S)-7,8-diammoniononanoate + CO2 + ATP = (4R,5S)-dethiobiotin + ADP + phosphate + 3 H(+). The protein operates within cofactor biosynthesis; biotin biosynthesis; biotin from 7,8-diaminononanoate: step 1/2. Catalyzes a mechanistically unusual reaction, the ATP-dependent insertion of CO2 between the N7 and N8 nitrogen atoms of 7,8-diaminopelargonic acid (DAPA, also called 7,8-diammoniononanoate) to form a ureido ring. The protein is ATP-dependent dethiobiotin synthetase BioD of Helicobacter pylori (strain ATCC 700392 / 26695) (Campylobacter pylori).